A 153-amino-acid polypeptide reads, in one-letter code: Pheromone-binding protein Gp-9 (153 aa).

The first 19 residues, 1 to 19 (MKTLILHICIFALVAFASA), serve as a signal peptide directing secretion. 3 disulfides stabilise this stretch: cysteine 37-cysteine 77, cysteine 73-cysteine 129, and cysteine 118-cysteine 138.

The protein belongs to the PBP/GOBP family. In terms of assembly, homodimer.

Its subcellular location is the secreted. In terms of biological role, colony queen number, a major feature of social organization, is associated with worker genotype for Gp-9. Colonies are headed by either a single reproductive queen (monogyne form) or multiple queens (polygyne form). Differences in worker Gp-9 genotypes between social forms may cause differences in workers' abilities to recognize queens and regulate their numbers. The chain is Pheromone-binding protein Gp-9 from Solenopsis nigella gensterblumi (Fire ant).